Reading from the N-terminus, the 368-residue chain is tRNA(Met) cytidine acetate ligase (368 aa).

Residues 7 to 20 (IAEFNPFHNGHKYL), Gly96, Asn152, and Arg175 each bind ATP.

This sequence belongs to the TmcAL family.

It is found in the cytoplasm. The catalysed reaction is cytidine(34) in elongator tRNA(Met) + acetate + ATP = N(4)-acetylcytidine(34) in elongator tRNA(Met) + AMP + diphosphate. Its function is as follows. Catalyzes the formation of N(4)-acetylcytidine (ac(4)C) at the wobble position of elongator tRNA(Met), using acetate and ATP as substrates. First activates an acetate ion to form acetyladenylate (Ac-AMP) and then transfers the acetyl group to tRNA to form ac(4)C34. This chain is tRNA(Met) cytidine acetate ligase, found in Streptococcus pyogenes serotype M4 (strain MGAS10750).